Consider the following 211-residue polypeptide: Inactive ribonuclease-like protein 10 (211 aa).

The N-terminal stretch at 1–24 is a signal peptide; that stretch reads MKLTLVQIFFMMLLLLLGLGVGLG.

The protein belongs to the pancreatic ribonuclease family. In terms of processing, the N-terminus is blocked. Glycosylated.

The protein localises to the secreted. Its function is as follows. Secreted proximal epididymal protein required for post-testicular sperm maturation and male fertility. May be involved in sperm adhesion to the egg zona pellucida. Does not have ribonuclease activity. The protein is Inactive ribonuclease-like protein 10 (RNASE10) of Bos taurus (Bovine).